The sequence spans 212 residues: Photosynthetic NDH subunit of subcomplex B 5, chloroplastic (212 aa).

Residues 1–48 constitute a chloroplast transit peptide; it reads MATVTILSPKSIPKVTDSKFGARVSDQIVNVVKCGKSGRRLKLAKLVS. The next 2 membrane-spanning stretches (helical) occupy residues 115 to 135 and 136 to 156; these read FQGLISCMFLPAIALGMYFDA and PGEYLFIGAALFTVVFCIIEM.

In terms of assembly, part of the chloroplast NDH complex, composed of a mixture of chloroplast and nucleus encoded subunits. Component of the NDH subcomplex B, at least composed of PnsB1, PnsB2, PnsB3, PnsB4 and PnsB5.

Its subcellular location is the plastid. It localises to the chloroplast membrane. In terms of biological role, NDH shuttles electrons from NAD(P)H:plastoquinone, via FMN and iron-sulfur (Fe-S) centers, to quinones in the photosynthetic chain and possibly in a chloroplast respiratory chain. The immediate electron acceptor for the enzyme in this species is believed to be plastoquinone. Couples the redox reaction to proton translocation, and thus conserves the redox energy in a proton gradient. This is Photosynthetic NDH subunit of subcomplex B 5, chloroplastic from Arabidopsis thaliana (Mouse-ear cress).